Here is a 372-residue protein sequence, read N- to C-terminus: uncharacterized protein (372 aa).

4 to 18 (YIIVGAGILGASTAY) provides a ligand contact to FAD.

It belongs to the DadA oxidoreductase family. The cofactor is FAD.

This is an uncharacterized protein from Bacillus subtilis (strain 168).